Consider the following 66-residue polypeptide: Large ribosomal subunit protein bL35 (66 aa).

Residues 19-45 are disordered; sequence SGKVVAAQSTKRHGMTKRSKRSLRTRR. Positions 28-45 are enriched in basic residues; the sequence is TKRHGMTKRSKRSLRTRR.

Belongs to the bacterial ribosomal protein bL35 family.

The sequence is that of Large ribosomal subunit protein bL35 from Anaplasma phagocytophilum (strain HZ).